The following is a 459-amino-acid chain: MKKLWGGRFQKTPEKWVDEFGASIHFDKTLVKEDIAGSLAHASMLEKCGILTEAEAVKIKEGLTSLLHKAEKNELDFSVDCEDIHLNLEKMLIDEIGPLGGKLHTARSRNDQVATDMHLYLKGHTEHIIELITAFQHVLIEKAEEHVETILPGYTHLQRAQPISFAHHLLAYFWMLERDKERYHDSFKRINKSPLGCGALAGTTFPIDREYSADLLGFDSIYENSLDGVSDRDFILEFLSASSILMMHLSRFSEEIILWCSQEFKFIELDDTYATGSSMMPQKKNPDMAELIRGKTGRVYGDLIGLLTIMKGLPLAYNKDLQEDKEGMFDTVKTVEGSLEIFAGMIKTMTVNKNMMKKATEQDFSNATELADYLAKKGMPFREAHEVVGRLVFTCIEKGIYLSGLPFEEFKKASGLFEEDVYIVLDPHHAVEKRMSEGGTGFKKVTEAIQKAKQCLNNF.

Belongs to the lyase 1 family. Argininosuccinate lyase subfamily.

The protein localises to the cytoplasm. The enzyme catalyses 2-(N(omega)-L-arginino)succinate = fumarate + L-arginine. It functions in the pathway amino-acid biosynthesis; L-arginine biosynthesis; L-arginine from L-ornithine and carbamoyl phosphate: step 3/3. This Bacillus licheniformis (strain ATCC 14580 / DSM 13 / JCM 2505 / CCUG 7422 / NBRC 12200 / NCIMB 9375 / NCTC 10341 / NRRL NRS-1264 / Gibson 46) protein is Argininosuccinate lyase.